Reading from the N-terminus, the 303-residue chain is Recombination-associated protein RdgC (303 aa).

It belongs to the RdgC family.

It localises to the cytoplasm. The protein localises to the nucleoid. Its function is as follows. May be involved in recombination. The chain is Recombination-associated protein RdgC from Enterobacter sp. (strain 638).